We begin with the raw amino-acid sequence, 53 residues long: Small ribosomal subunit protein uS14 (53 aa).

Zn(2+) contacts are provided by Cys-17, Cys-20, Cys-36, and Cys-39.

This sequence belongs to the universal ribosomal protein uS14 family. Zinc-binding uS14 subfamily. Part of the 30S ribosomal subunit. It depends on Zn(2+) as a cofactor.

Binds 16S rRNA, required for the assembly of 30S particles. This Methanocaldococcus jannaschii (strain ATCC 43067 / DSM 2661 / JAL-1 / JCM 10045 / NBRC 100440) (Methanococcus jannaschii) protein is Small ribosomal subunit protein uS14.